The chain runs to 762 residues: MASNERDAISWYQKKIGAYDQQIWEKSIEQTQIKGFKNKPKKMGHIKPDLIDVDLIRGSTFAKAKPEIPWTSLTRKGLVRVVFFPLFSSWWIQVTSLRIFVWLLLLYLMQVTAIVLYLMMPIVSVSEVLGPLCLMLLMGTVHCQIVSTQITRPSGNNGNRRRRKLRKTVNGDGTRDNGNNSPDKIRAVETLDSAPSVGGFWGTLFGNRIKRVKLVSNKGTETDNDSGCFHPIIKKRQGRPEIRMWQAREKAKVSDGEKCRREAYRRLGNGVSDDLSSEEDGEARTQMILLRRSVEGASSDNGCEVKNRKSILSRHLNSQVKKTATRWCHIVRDSDSLAESEFESAAFSQGSRSGMSGGSRSLNLSRRDSESTRHDSETEDMLWDDLLHGPECRSSVTSDSEGAHVNTLHSGTKRDPKEDVFQQNHLFWLQNSSPASERVSAIIWEGNECKKMDMSVLEISGIIMSRVNAYEQGVGYQMLGNAVTIGLALFPFLYRLFREKSFDQLKSISAEEVLTLFCGAPPVTPVVILSIINFFERLCLTWIFFFMMCVAERTYKQRFLFAKLFSHITSARKARKYEIPHFRLKKVENIKIWLSLRSYLKRRGPQRSVDVVVSSVFLLTLSIAFICCAQVLQGHKTFLNDAYNWEFLIWETALLLFLLRLASLGSETNKKYSNVSILLTEQINLYLKMEKKPNKKEQLTLVNNVLKLSTKLLKELDTPFRLYGLTMNPLIYNITRVVILSAVSGVISDLLGFNIRLWKIKS.

A PHTF domain is found at 6-150 (RDAISWYQKK…VHCQIVSTQI (145 aa)). 3 helical membrane passes run 77–97 (GLVR…VTSL), 99–119 (IFVW…LYLM), and 121–141 (PIVS…MGTV). Residues 152–184 (RPSGNNGNRRRRKLRKTVNGDGTRDNGNNSPDK) form a disordered region. Asn-179 and Asn-224 each carry an N-linked (GlcNAc...) asparagine glycan. A phosphoserine mark is found at Ser-272, Ser-276, Ser-277, Ser-334, and Ser-336. The tract at residues 345–415 (AAFSQGSRSG…NTLHSGTKRD (71 aa)) is disordered. The span at 348-364 (SQGSRSGMSGGSRSLNL) shows a compositional bias: low complexity. Asn-363 carries N-linked (GlcNAc...) asparagine glycosylation. Residues 365–376 (SRRDSESTRHDS) are compositionally biased toward basic and acidic residues. Asn-431 carries N-linked (GlcNAc...) asparagine glycosylation. 4 consecutive transmembrane segments (helical) span residues 473-493 (GVGY…FPFL), 515-535 (TLFC…INFF), 611-631 (VVVS…CAQV), and 645-665 (WEFL…ASLG). Asn-674 and Asn-733 each carry an N-linked (GlcNAc...) asparagine glycan. The helical transmembrane segment at 737-757 (VVILSAVSGVISDLLGFNIRL) threads the bilayer.

In terms of assembly, interacts with FEM1B. Highly expressed in testis.

It localises to the endoplasmic reticulum membrane. The protein resides in the golgi apparatus. The protein localises to the cis-Golgi network membrane. This Rattus norvegicus (Rat) protein is Protein PHTF1.